Here is a 20-residue protein sequence, read N- to C-terminus: Cytochrome P450IIB (20 aa).

The protein belongs to the cytochrome P450 family. The cofactor is heme.

The protein localises to the endoplasmic reticulum membrane. It localises to the microsome membrane. It carries out the reaction an organic molecule + reduced [NADPH--hemoprotein reductase] + O2 = an alcohol + oxidized [NADPH--hemoprotein reductase] + H2O + H(+). Functionally, cytochromes P450 are a group of heme-thiolate monooxygenases. In liver microsomes, this enzyme is involved in an NADPH-dependent electron transport pathway. This isozyme is active upon P.nitroanisole, aniline, D-benzphetamine, delta(9)-tetrahydrocannabinol (THC) and strychnine. In Cavia porcellus (Guinea pig), this protein is Cytochrome P450IIB.